A 185-amino-acid polypeptide reads, in one-letter code: MIKQVEKNAKQKMEKVLEATKHDLNTVRTGRARPSLVENIMVDYYGTQTPIQQMAKVVAPEARQLVIEPWDKSVIESIEKAILKSNLGLNPSNDGNVIRINIPQLTEERRKELVKVAHEKAEKGRIAIRNIRREANDELKEMEKNSEISEDNYHRGLDMIQELTDTYIDKIDKMLEDKEQDIMEV.

It belongs to the RRF family.

It is found in the cytoplasm. Functionally, responsible for the release of ribosomes from messenger RNA at the termination of protein biosynthesis. May increase the efficiency of translation by recycling ribosomes from one round of translation to another. This is Ribosome-recycling factor from Halothermothrix orenii (strain H 168 / OCM 544 / DSM 9562).